The sequence spans 244 residues: Haloacid dehalogenase-like hydrolase domain-containing protein 3 (244 aa).

It belongs to the HAD-like hydrolase superfamily.

The chain is Haloacid dehalogenase-like hydrolase domain-containing protein 3 (hdhd3) from Xenopus laevis (African clawed frog).